Here is a 58-residue protein sequence, read N- to C-terminus: Ribosome modulation factor (58 aa).

It belongs to the ribosome modulation factor family.

It localises to the cytoplasm. During stationary phase, converts 70S ribosomes to an inactive dimeric form (100S ribosomes). In Tolumonas auensis (strain DSM 9187 / NBRC 110442 / TA 4), this protein is Ribosome modulation factor.